Here is a 372-residue protein sequence, read N- to C-terminus: Lipid-A-disaccharide synthase (372 aa).

It belongs to the LpxB family.

It carries out the reaction a lipid X + a UDP-2-N,3-O-bis[(3R)-3-hydroxyacyl]-alpha-D-glucosamine = a lipid A disaccharide + UDP + H(+). It functions in the pathway bacterial outer membrane biogenesis; LPS lipid A biosynthesis. In terms of biological role, condensation of UDP-2,3-diacylglucosamine and 2,3-diacylglucosamine-1-phosphate to form lipid A disaccharide, a precursor of lipid A, a phosphorylated glycolipid that anchors the lipopolysaccharide to the outer membrane of the cell. The chain is Lipid-A-disaccharide synthase from Thiobacillus denitrificans (strain ATCC 25259 / T1).